A 477-amino-acid polypeptide reads, in one-letter code: Aspartyl/glutamyl-tRNA(Asn/Gln) amidotransferase subunit B (477 aa).

This sequence belongs to the GatB/GatE family. GatB subfamily. In terms of assembly, heterotrimer of A, B and C subunits.

It carries out the reaction L-glutamyl-tRNA(Gln) + L-glutamine + ATP + H2O = L-glutaminyl-tRNA(Gln) + L-glutamate + ADP + phosphate + H(+). The catalysed reaction is L-aspartyl-tRNA(Asn) + L-glutamine + ATP + H2O = L-asparaginyl-tRNA(Asn) + L-glutamate + ADP + phosphate + 2 H(+). Allows the formation of correctly charged Asn-tRNA(Asn) or Gln-tRNA(Gln) through the transamidation of misacylated Asp-tRNA(Asn) or Glu-tRNA(Gln) in organisms which lack either or both of asparaginyl-tRNA or glutaminyl-tRNA synthetases. The reaction takes place in the presence of glutamine and ATP through an activated phospho-Asp-tRNA(Asn) or phospho-Glu-tRNA(Gln). The protein is Aspartyl/glutamyl-tRNA(Asn/Gln) amidotransferase subunit B of Nitrosococcus oceani (strain ATCC 19707 / BCRC 17464 / JCM 30415 / NCIMB 11848 / C-107).